A 417-amino-acid polypeptide reads, in one-letter code: Lipoyl synthase, mitochondrial (417 aa).

A disordered region spans residues 35-56 (EANPTDLAGLKRKAKRRPTKLA). Positions 44-53 (LKRKAKRRPT) are enriched in basic residues. [4Fe-4S] cluster contacts are provided by Cys122, Cys127, Cys133, Cys152, Cys156, Cys159, and Ser367. Residues 137 to 356 (KKSEATATIM…RDKALEMGFL (220 aa)) enclose the Radical SAM core domain. The tract at residues 389–417 (IEEQQHDKENNNLLLSKEDEKTTQEKANF) is disordered. Basic and acidic residues predominate over residues 391 to 417 (EQQHDKENNNLLLSKEDEKTTQEKANF).

It belongs to the radical SAM superfamily. Lipoyl synthase family. Requires [4Fe-4S] cluster as cofactor.

The protein resides in the mitochondrion. It carries out the reaction [[Fe-S] cluster scaffold protein carrying a second [4Fe-4S](2+) cluster] + N(6)-octanoyl-L-lysyl-[protein] + 2 oxidized [2Fe-2S]-[ferredoxin] + 2 S-adenosyl-L-methionine + 4 H(+) = [[Fe-S] cluster scaffold protein] + N(6)-[(R)-dihydrolipoyl]-L-lysyl-[protein] + 4 Fe(3+) + 2 hydrogen sulfide + 2 5'-deoxyadenosine + 2 L-methionine + 2 reduced [2Fe-2S]-[ferredoxin]. The protein operates within protein modification; protein lipoylation via endogenous pathway; protein N(6)-(lipoyl)lysine from octanoyl-[acyl-carrier-protein]: step 2/2. Functionally, catalyzes the radical-mediated insertion of two sulfur atoms into the C-6 and C-8 positions of the octanoyl moiety bound to the lipoyl domains of lipoate-dependent enzymes, thereby converting the octanoylated domains into lipoylated derivatives. This chain is Lipoyl synthase, mitochondrial, found in Komagataella phaffii (strain GS115 / ATCC 20864) (Yeast).